Consider the following 444-residue polypeptide: MREILHIQGGQCGNQIGSKFWEVVCDEHGIDPTGRYMGTSDVQLERVNVYYNEASCGRFVPRAVLMDLEPGTMDAVRTGPYGQIFRPDNFVFGQSGAGNNWAKGHYTEGAELIDSVLDVVRKEAENCDCLQGFQVCHSLGGGTGSGMGTLLISKIREEYPDRMMMTFSVFPSPKVSDTVVEPYNATLSVHQLVENADECMVLDNEALYDICFRTLKLTTPSFGDLNHLISATMSGVTCCLRFPGQLNSDLRKLAVNLIPFPRLHFFMVGFAPLTSRGSQQYRSLTVPELTQQMWDSKNMMCAADPRHGRYLTASAMFRGKMSTKEVDEQMINVQNKNSSYFVEWIPNNVKSSVCDIPPRGLSMSSTFVGNSTSIQEMFRRVSEQFTAMFRRKAFLHWYTGEGMDEMEFTEAESNMNDLVSEYQQYQDATADEEADYEEEEAAAE.

8 residues coordinate GTP: Gln11, Glu69, Ser138, Gly142, Thr143, Gly144, Asn204, and Asn226. Residue Glu69 participates in Mg(2+) binding.

Belongs to the tubulin family. Dimer of alpha and beta chains. A typical microtubule is a hollow water-filled tube with an outer diameter of 25 nm and an inner diameter of 15 nM. Alpha-beta heterodimers associate head-to-tail to form protofilaments running lengthwise along the microtubule wall with the beta-tubulin subunit facing the microtubule plus end conferring a structural polarity. Microtubules usually have 13 protofilaments but different protofilament numbers can be found in some organisms and specialized cells. Mg(2+) serves as cofactor.

It is found in the cytoplasm. The protein localises to the cytoskeleton. Tubulin is the major constituent of microtubules, a cylinder consisting of laterally associated linear protofilaments composed of alpha- and beta-tubulin heterodimers. Microtubules grow by the addition of GTP-tubulin dimers to the microtubule end, where a stabilizing cap forms. Below the cap, tubulin dimers are in GDP-bound state, owing to GTPase activity of alpha-tubulin. The sequence is that of Tubulin beta-2 chain (TUBB2) from Zea mays (Maize).